We begin with the raw amino-acid sequence, 84 residues long: Cytochrome b559 subunit alpha (84 aa).

The helical transmembrane segment at 22-36 (VIHSITIPALFVAGW) threads the bilayer. Histidine 24 contributes to the heme binding site.

It belongs to the PsbE/PsbF family. As to quaternary structure, heterodimer of an alpha subunit and a beta subunit. PSII is composed of 1 copy each of membrane proteins PsbA, PsbB, PsbC, PsbD, PsbE, PsbF, PsbH, PsbI, PsbJ, PsbK, PsbL, PsbM, PsbT, PsbX, PsbY, PsbZ, Psb30/Ycf12, at least 3 peripheral proteins of the oxygen-evolving complex and a large number of cofactors. It forms dimeric complexes. Heme b serves as cofactor.

It is found in the plastid. The protein localises to the chloroplast thylakoid membrane. Functionally, this b-type cytochrome is tightly associated with the reaction center of photosystem II (PSII). PSII is a light-driven water:plastoquinone oxidoreductase that uses light energy to abstract electrons from H(2)O, generating O(2) and a proton gradient subsequently used for ATP formation. It consists of a core antenna complex that captures photons, and an electron transfer chain that converts photonic excitation into a charge separation. In Porphyra purpurea (Red seaweed), this protein is Cytochrome b559 subunit alpha.